We begin with the raw amino-acid sequence, 379 residues long: 3-dehydroquinate synthase (379 aa).

This sequence belongs to the archaeal-type DHQ synthase family.

It catalyses the reaction 2-amino-2,3,7-trideoxy-D-lyxo-hept-6-ulosonate + NAD(+) + H2O = 3-dehydroquinate + NH4(+) + NADH + H(+). Its function is as follows. Catalyzes the oxidative deamination and cyclization of 2-amino-3,7-dideoxy-D-threo-hept-6-ulosonic acid (ADH) to yield 3-dehydroquinate (DHQ), which is fed into the canonical shikimic pathway of aromatic amino acid biosynthesis. This Methanococcoides burtonii (strain DSM 6242 / NBRC 107633 / OCM 468 / ACE-M) protein is 3-dehydroquinate synthase.